We begin with the raw amino-acid sequence, 889 residues long: Alanine--tRNA ligase (889 aa).

Residues His-566, His-570, Cys-683, and His-687 each coordinate Zn(2+).

This sequence belongs to the class-II aminoacyl-tRNA synthetase family. The cofactor is Zn(2+).

The protein resides in the cytoplasm. It carries out the reaction tRNA(Ala) + L-alanine + ATP = L-alanyl-tRNA(Ala) + AMP + diphosphate. In terms of biological role, catalyzes the attachment of alanine to tRNA(Ala) in a two-step reaction: alanine is first activated by ATP to form Ala-AMP and then transferred to the acceptor end of tRNA(Ala). Also edits incorrectly charged Ser-tRNA(Ala) and Gly-tRNA(Ala) via its editing domain. This Herpetosiphon aurantiacus (strain ATCC 23779 / DSM 785 / 114-95) protein is Alanine--tRNA ligase.